The sequence spans 87 residues: Kappa-5-bungarotoxin (87 aa).

An N-terminal signal peptide occupies residues 1–21 (MKTLLLTLVVVTIVCLDLGYT). 5 disulfides stabilise this stretch: C24/C42, C35/C63, C48/C52, C67/C79, and C80/C85.

Belongs to the three-finger toxin family. Long-chain subfamily. Kappa-neurotoxin sub-subfamily. In terms of assembly, homo- and heterodimer; non-covalently linked. Expressed by the venom gland.

The protein resides in the secreted. In terms of biological role, postsynaptic neurotoxin that binds and inhibits neuronal nicotinic acetylcholine receptors (nAChR) with high affinity (IC(50)&lt;100 nM). Is a selective, and slowly reversible antagonist of alpha-3/CHRNA3-containing and some alpha-4/CHRNA4-containing AChRs. This is Kappa-5-bungarotoxin from Bungarus multicinctus (Many-banded krait).